Consider the following 727-residue polypeptide: Protein edg-1 (727 aa).

The interval 703-727 (FAESSVKPTTSSAYGNSSNFSRYAD) is disordered.

As to quaternary structure, may interact with deps-1 and prg-1.

The protein resides in the cytoplasmic granule. Plays a role in regulating deps-1 cluster formation in the germline. This Caenorhabditis elegans protein is Protein edg-1.